The sequence spans 347 residues: Rhodopsin (347 aa).

The Extracellular portion of the chain corresponds to 1–33 (TEGPDFYIPMVNTTGVVRSPYEYPQYYLVNPAA). An N-linked (GlcNAc...) asparagine glycan is attached at N12. Residues 34–58 (FAVLGAYMFFLIIIGFPINFLTLYV) form a helical membrane-spanning segment. Over 59 to 70 (TLEHKKLRTPLN) the chain is Cytoplasmic. The helical transmembrane segment at 71–93 (YILLNLAVADLFMVIGGFTTTMY) threads the bilayer. Topologically, residues 94–107 (SSMHGYFVLGRLGC) are extracellular. Residues C107 and C184 are joined by a disulfide bond. Residues 108–130 (NIEGFFATLGGMISLWSLAVLAI) traverse the membrane as a helical segment. A 'Ionic lock' involved in activated form stabilization motif is present at residues 131–133 (ERW). At 131-149 (ERWVVVCKPISNFRFGENH) the chain is on the cytoplasmic side. A helical membrane pass occupies residues 150-170 (AIMGVSLTWVMALACTVPPLV). Over 171–199 (GWSRYIPEGMQCACGIDYYTRAEGYNNES) the chain is Extracellular. N197 carries an N-linked (GlcNAc...) asparagine glycan. The chain crosses the membrane as a helical span at residues 200-221 (FVIYMFTFHFLFPMFIIFFCYG). Over 222–249 (RLLCAVKEAAAAQQESETTQRAEREVTR) the chain is Cytoplasmic. A helical membrane pass occupies residues 250-271 (MVILMVIGYLVCWLPYASVAWF). At 272 to 283 (IFTHKGSEFGPL) the chain is on the extracellular side. The chain crosses the membrane as a helical span at residues 284–305 (FMAVPSFFAKSSSIYNPIIYIC). The residue at position 293 (K293) is an N6-(retinylidene)lysine. At 306–347 (MNKQFRQCMITTLFCGKNPFEGQEEDSSTKTEASSASSVSPA) the chain is on the cytoplasmic side. C320 is lipidated: S-palmitoyl cysteine. The tract at residues 326 to 347 (EGQEEDSSTKTEASSASSVSPA) is disordered. A compositionally biased stretch (low complexity) spans 335–347 (KTEASSASSVSPA).

Belongs to the G-protein coupled receptor 1 family. Opsin subfamily. Phosphorylated on some or all of the serine and threonine residues present in the C-terminal region. Post-translationally, contains one covalently linked retinal chromophore.

The protein resides in the membrane. The protein localises to the cell projection. It is found in the cilium. Its subcellular location is the photoreceptor outer segment. In terms of biological role, photoreceptor required for image-forming vision at low light intensity. While most salt water fish species use retinal as chromophore, most freshwater fish use 3-dehydroretinal, or a mixture of retinal and 3-dehydroretinal. Light-induced isomerization of 11-cis to all-trans retinal triggers a conformational change that activates signaling via G-proteins. Subsequent receptor phosphorylation mediates displacement of the bound G-protein alpha subunit by arrestin and terminates signaling. In Sargocentron tiere (Blue lined squirrelfish), this protein is Rhodopsin (rho).